The primary structure comprises 758 residues: Microtubule-associated protein tau (758 aa).

Positions 1–26 (MAEPHQEFDVTEDHAGTYGLGDRKDQ) are enriched in basic and acidic residues. The tract at residues 1–573 (MAEPHQEFDV…PVPMPDLKNV (573 aa)) is disordered. An N-acetylalanine modification is found at Ala2. A phosphotyrosine mark is found at Tyr18 and Tyr29. Lys44 participates in a covalent cross-link: Glycyl lysine isopeptide (Lys-Gly) (interchain with G-Cter in ubiquitin). A phosphoserine mark is found at Ser46 and Ser61. The segment covering 61-71 (SETSDAKSTPT) has biased composition (polar residues). Phosphothreonine is present on residues Thr69, Thr71, and Thr111. Basic and acidic residues-rich tracts occupy residues 179 to 189 (EGGRHAPELLK) and 207 to 216 (GGKERPGSKE). Ser214 is modified (phosphoserine). Over residues 217 to 228 (EVDEDRDVDESS) the composition is skewed to acidic residues. The segment covering 314 to 323 (EQAHSEEHLR) has biased composition (basic and acidic residues). Residues 325-340 (AAFPGAPGEGPEAQGP) show a composition bias toward low complexity. Composition is skewed to basic and acidic residues over residues 344 to 356 (EDAKEADLPEPSE) and 381 to 393 (KSKDGTGSDDKKA). The span at 440 to 452 (KYVSSVTPRTGSS) shows a compositional bias: polar residues. Residues 455-466 (KEMKLKGADGKT) are compositionally biased toward basic and acidic residues. Thr470 carries the phosphothreonine modification. At Arg472 the chain carries Omega-N-methylarginine. Lys480 is subject to N6,N6-dimethyllysine; alternate. Lys480 carries the post-translational modification N6-acetyllysine; alternate. A phosphothreonine mark is found at Thr486, Thr492, and Thr498. Positions 491–503 (KTPPAPKTPPSSG) are enriched in pro residues. A phosphoserine mark is found at Ser502, Ser508, and Ser512. Low complexity predominate over residues 504–531 (EPPKSGDRSGYSSPGSPGTPGSRSRTPS). The residue at position 514 (Tyr514) is a Phosphotyrosine. Phosphoserine occurs at positions 515, 516, and 519. Phosphothreonine occurs at positions 522 and 529. At Ser531 the chain carries Phosphoserine. Thr534 bears the Phosphothreonine mark. Position 542 is an N6-acetyllysine (Lys542). At Thr548 the chain carries Phosphothreonine. Ser552 and Ser554 each carry phosphoserine. Tau/MAP repeat units follow at residues 561–591 (QTAPVPMPDLKNVKSKIGSTENLKHQPGGGK), 592–622 (VQIINKKLDLSNVQSKCGSKDNIKHVPGGGS), 623–653 (VQIVYKPVDLSKVTSKCGSLGNIHHKPGGGQ), and 654–685 (VEVKSEKLDFKDRVQSKIGSLDNITHVPGGGH). A Glycyl lysine isopeptide (Lys-Gly) (interchain with G-Cter in ubiquitin) cross-link involves residue Lys571. Lys576 is subject to N6-acetyllysine; alternate. Residue Lys576 is modified to N6-methyllysine; alternate. A Glycyl lysine isopeptide (Lys-Gly) (interchain with G-Cter in ubiquitin); alternate cross-link involves residue Lys576. Ser579 carries the phosphoserine modification. A Glycyl lysine isopeptide (Lys-Gly) (interchain with G-Cter in ubiquitin) cross-link involves residue Lys584. Lys598 bears the N6-acetyllysine; alternate mark. Lys598 participates in a covalent cross-link: Glycyl lysine isopeptide (Lys-Gly) (interchain with G-Cter in ubiquitin); alternate. Ser602 and Ser606 each carry phosphoserine. Residue Lys607 is modified to N6-acetyllysine. Ser610 is subject to Phosphoserine. Lys615 is modified (N6-acetyllysine; alternate). Lys615 participates in a covalent cross-link: Glycyl lysine isopeptide (Lys-Gly) (interchain with G-Cter in ubiquitin); alternate. Position 622 is a phosphoserine (Ser622). Lys628 is subject to N6,N6-dimethyllysine; alternate. N6-acetyllysine; alternate is present on residues Lys628, Lys634, and Lys638. Residues Lys628, Lys634, and Lys638 each participate in a glycyl lysine isopeptide (Lys-Gly) (interchain with G-Cter in ubiquitin); alternate cross-link. Residue Ser641 is modified to Phosphoserine. N6-acetyllysine; alternate occurs at positions 648, 660, and 664. Residues Lys648, Lys660, and Lys664 each participate in a glycyl lysine isopeptide (Lys-Gly) (interchain with G-Cter in ubiquitin); alternate cross-link. Arg666 bears the Omega-N-methylarginine mark. Ser669 bears the Phosphoserine mark. Lys670 participates in a covalent cross-link: Glycyl lysine isopeptide (Lys-Gly) (interchain with G-Cter in ubiquitin). Position 673 is a phosphoserine (Ser673). Lys686 bears the N6-acetyllysine; alternate mark. A Glycyl lysine isopeptide (Lys-Gly) (interchain with G-Cter in ubiquitin); alternate cross-link involves residue Lys686. Lys692 is covalently cross-linked (Glycyl lysine isopeptide (Lys-Gly) (interchain with G-Cter in ubiquitin)). Lys702 bears the N6-acetyllysine; alternate mark. A Glycyl lysine isopeptide (Lys-Gly) (interchain with G-Cter in ubiquitin); alternate cross-link involves residue Lys702. Residue Tyr711 is modified to Phosphotyrosine. 2 positions are modified to phosphoserine: Ser713 and Ser717. The interval 715–734 (VVSGDTSPRHLSNVSSTGSI) is disordered. Positions 718–733 (GDTSPRHLSNVSSTGS) are enriched in polar residues. A Phosphothreonine modification is found at Thr720. 4 positions are modified to phosphoserine: Ser721, Ser726, Ser733, and Ser739. Thr744 bears the Phosphothreonine mark.

As to quaternary structure, interacts with MARK1, MARK2, MARK3 and MARK4. Interacts with SQSTM1 when polyubiquitinated. Interacts with PSMC2 through SQSTM1. Interacts with FKBP4. Binds to CSNK1D. Interacts with SGK1. Interacts with EPM2A; the interaction dephosphorylates MAPT at Ser-396. Interacts with PIN1. Interacts with LRRK2. Interacts with LRP1, leading to endocytosis; this interaction is reduced in the presence of LRPAP1/RAP. In terms of processing, polyubiquitinated. Requires functional TRAF6 and may provoke SQSTM1-dependent degradation by the proteasome. Phosphorylation at various serine and threonine residues in S-P or T-P motifs by proline-directed protein kinases (PDPK1, CDK1, CDK5, GSK3, MAPK) (a few sites per protein in interphase, more in mitosis), and at serine residues in K-X-G-S motifs by MAP/microtubule affinity-regulating kinase (MARK1, MARK2, MARK3 or MARK4), causing detachment from microtubules, and their disassembly. Phosphorylation at Ser-579 by BRSK1 and BRSK2 in neurons affects ability to bind microtubules and plays a role in neuron polarization. Phosphorylated by PHK. Dephosphorylation at several serine and threonine residues by the serine/threonine phosphatase PPP5C. Phosphorylation at Ser-214 by SGK1 mediates microtubule depolymerization and neurite formation in hippocampal neurons.

The protein resides in the cytoplasm. The protein localises to the cytosol. It localises to the cell membrane. It is found in the cytoskeleton. Its subcellular location is the cell projection. The protein resides in the axon. The protein localises to the dendrite. Its function is as follows. Promotes microtubule assembly and stability, and might be involved in the establishment and maintenance of neuronal polarity. The C-terminus binds axonal microtubules while the N-terminus binds neural plasma membrane components, suggesting that tau functions as a linker protein between both. Axonal polarity is predetermined by tau localization (in the neuronal cell) in the domain of the cell body defined by the centrosome. The short isoforms allow plasticity of the cytoskeleton whereas the longer isoforms may preferentially play a role in its stabilization. This chain is Microtubule-associated protein tau (MAPT), found in Pongo pygmaeus (Bornean orangutan).